A 433-amino-acid chain; its full sequence is Homogentisate 1,2-dioxygenase (433 aa).

Histidine 288 serves as the catalytic Proton acceptor. Positions 331 and 337 each coordinate Fe cation. Homogentisate contacts are provided by tyrosine 346 and histidine 367. Position 367 (histidine 367) interacts with Fe cation.

Belongs to the homogentisate dioxygenase family. Hexamer; dimer of trimers. Requires Fe cation as cofactor.

The catalysed reaction is homogentisate + O2 = 4-maleylacetoacetate + H(+). It participates in amino-acid degradation; L-phenylalanine degradation; acetoacetate and fumarate from L-phenylalanine: step 4/6. Its function is as follows. Involved in the catabolism of homogentisate (2,5-dihydroxyphenylacetate or 2,5-OH-PhAc), a central intermediate in the degradation of phenylalanine and tyrosine. Catalyzes the oxidative ring cleavage of the aromatic ring of homogentisate to yield maleylacetoacetate. This chain is Homogentisate 1,2-dioxygenase, found in Pseudomonas entomophila (strain L48).